The following is a 356-amino-acid chain: Mitogen-activated protein kinase PMK1 (356 aa).

Positions 24–312 constitute a Protein kinase domain; it reads YDIQDVVGEG…VEEALKHPYL (289 aa). Residues 30–38 and K53 contribute to the ATP site; that span reads VGEGAYGVV.

Belongs to the protein kinase superfamily. CMGC Ser/Thr protein kinase family. MAP kinase subfamily. Mg(2+) is required as a cofactor. Post-translationally, phosphorylated by MST7.

The enzyme catalyses L-seryl-[protein] + ATP = O-phospho-L-seryl-[protein] + ADP + H(+). It catalyses the reaction L-threonyl-[protein] + ATP = O-phospho-L-threonyl-[protein] + ADP + H(+). Functionally, mitogen-activated protein kinase; part of the MST11-MST7-PMK1 MAP kinase (MAPK) cascade that is essential for appressorium formation, penetration and invasive growth. Central regulator of appressorium development that acts downstream of the cAMP signal. The MST11-MST7-PMK1 MAP kinase cascade transduces signals from the cell surface sensors MDB2 and SHO1 that recognize various surface signals such as surface hydrophobicity, cutin monomers, and rice leaf waxes. Regulates expression of secreted fungal effector proteins implicated of host immune defenses, preventing reactive oxygen species generation and excessive callose deposition at plasmodesmata. Furthermore, controls the hyphal constriction required for fungal growth from one rice cell to the neighboring cell, enabling host tissue colonization and blast disease. Targets downstream of the PMK1-MAPK pathway include transcription factor MST12 and pathogenicity-related genes GAS1 and GAS2, both of which are expressed during appressorium formation, even if regulation of MST12 is not associated with expression of GAS1 or GAS2. The chain is Mitogen-activated protein kinase PMK1 from Pyricularia oryzae (Rice blast fungus).